The chain runs to 3660 residues: Dystrophin (3660 aa).

Residues 1–244 (MSAHVLWYEE…YVTSLFQVLP (244 aa)) form an actin-binding region. Calponin-homology (CH) domains lie at 19–123 (DVQK…LHWQ) and 138–244 (TNSE…QVLP). Spectrin repeat units follow at residues 341 to 449 (MDLD…NLHK), 450 to 558 (ILMD…LLQD), 561 to 669 (RKWQ…QVSQ), 721 to 830 (EIRK…WLEY), 832 to 936 (NSII…QLQT), 945 to 1047 (RYKD…KLED), 1050 to 1156 (TKLQ…ALKG), 1159 to 1265 (DKTV…TLEE), 1268 to 1369 (ACWH…SLEQ), 1470 to 1570 (EQRL…ELEK), 1573 to 1678 (KLSR…LLME), 1681 to 1782 (KHME…FIPL), 1879 to 1981 (HQWY…TVLE), 2013 to 2103 (LSEV…RFDK), 2106 to 2211 (EKWR…RIEE), 2214 to 2321 (NILS…EIEI), 2472 to 2574 (FNKA…QLHE), 2577 to 2683 (KDST…ALES), 2686 to 2799 (LMLQ…HLEA), 2802 to 2904 (DQWK…LRRQ), 2906 to 2928 (DDVR…KIDD), and 2931 to 3037 (ERLQ…QLHE). In terms of domain architecture, WW spans 3052 to 3085 (TSVQGPWERAISPNKVPYYINHETQTTCWDHPKM). The segment at 3305-3361 (KHQAKCNICKECPIIGFRYRSLKHFNYDICQSCFFSGRVAKGHKMHYPMVEYCTPTT) adopts a ZZ-type; degenerate zinc-finger fold. Zn(2+) contacts are provided by C3310, C3313, C3334, and C3337. 2 disordered regions span residues 3503–3526 (KQQH…VSPQ) and 3575–3660 (PQAD…EATM). Polar residues-rich tracts occupy residues 3582–3601 (NGTT…SSQP) and 3637–3647 (QLNNSFPSSRG).

It is found in the cell membrane. The protein resides in the sarcolemma. Its subcellular location is the cytoplasm. It localises to the cytoskeleton. The protein localises to the postsynaptic cell membrane. In terms of biological role, may play a role in anchoring the cytoskeleton to the plasma membrane. The protein is Dystrophin (DMD) of Gallus gallus (Chicken).